We begin with the raw amino-acid sequence, 246 residues long: Biosynthetic peptidoglycan transglycosylase (246 aa).

The chain crosses the membrane as a helical span at residues 20–42 (WLRWLMAAPLLFAAASVLQVLIL).

Belongs to the glycosyltransferase 51 family.

It is found in the cell inner membrane. It catalyses the reaction [GlcNAc-(1-&gt;4)-Mur2Ac(oyl-L-Ala-gamma-D-Glu-L-Lys-D-Ala-D-Ala)](n)-di-trans,octa-cis-undecaprenyl diphosphate + beta-D-GlcNAc-(1-&gt;4)-Mur2Ac(oyl-L-Ala-gamma-D-Glu-L-Lys-D-Ala-D-Ala)-di-trans,octa-cis-undecaprenyl diphosphate = [GlcNAc-(1-&gt;4)-Mur2Ac(oyl-L-Ala-gamma-D-Glu-L-Lys-D-Ala-D-Ala)](n+1)-di-trans,octa-cis-undecaprenyl diphosphate + di-trans,octa-cis-undecaprenyl diphosphate + H(+). Its pathway is cell wall biogenesis; peptidoglycan biosynthesis. Functionally, peptidoglycan polymerase that catalyzes glycan chain elongation from lipid-linked precursors. This Xanthomonas axonopodis pv. citri (strain 306) protein is Biosynthetic peptidoglycan transglycosylase.